The following is a 136-amino-acid chain: MGSETLSVIQVRLQNIYDNDKVALLKITCNTNRLILLTHTLAKSVIHTIKLNGTVFLHIVTSSDFCPTSDIIESANFTTMPVLQNGGYIWELIELTHCFQTNGLIDDNCEVTFSKRLSDSELEKYSSQLSDLLGLN.

This sequence belongs to the pneumovirus non-structural protein 1 family. As to quaternary structure, monomer. Homomultimer. Heteromultimer with NS2. Interacts with the matrix protein M. Interacts with host ELOC and CUL2; this interaction allows NS1 to form an active E3 ligase with ELOC and CUL2. Interacts with host IRF3; this interaction leads to the disrupted association of IRF3 with CREBBP and thus reduced binding of IRF3 to the IFN-beta promoter. Interacts with host MAVS; this interaction prevents MAVS binding to RIGI and inhibits signaling pathway leading to interferon production. Interacts with host TRIM25 (via SPRY domain); this interaction suppresses RIGI ubiquitination and results in decreased interaction between RIGI and MAVS.

It is found in the host cytoplasm. The protein resides in the host mitochondrion. The protein localises to the host nucleus. Functionally, plays a major role in antagonizing the type I IFN-mediated antiviral response by degrading or inhibiting multiple cellular factors required for either IFN induction or response pathways. Acts cooperatively with NS2 to repress activation and nuclear translocation of host IFN-regulatory factor IRF3. Also disrupts the association of IRF3 with CREBBP. Interacts with host mitochondrial-associated membrane (MAM) MAVS and prevents the interaction with RIGI. Interacts with TRIM25 to suppress TRIM25-mediated RIGI ubiquitination and thereby RIGI-MAVS interaction. Together with NS2, participates in the proteasomal degradation of host STAT2, IRF3, IRF7, TBK1 and RIGI through a NS-degradasome involving CUL2 and Elongin-C. The degradasome requires an intact mitochondrial MAVS. Decreases the levels of host TRAF3 and IKBKE/IKK-epsilon. As functions other than disruptions of the type I IFN-mediated antiviral signaling pathways, induces host SOCS1 and SOCS3 expression. Suppresses premature apoptosis by an NF-kappa-B-dependent, interferon-independent mechanism and thus facilitates virus growth. Additionally, NS1 may serve some inhibitory role in viral transcription and RNA replication. Suppresses proliferation and activation of host CD103+ CD8+ cytotoxic T-lymphocytes and Th17 helper T-lymphocytes. The protein is Non-structural protein 1 (1C) of Ovis aries (Sheep).